The sequence spans 639 residues: Chaperone protein HtpG (639 aa).

An a; substrate-binding region spans residues 1–347; sequence MSHQETHGFQ…SNDLPLNVSR (347 aa). The b stretch occupies residues 348 to 564; that stretch reads EILQDNKITT…AGEMSSQMIK (217 aa). The tract at residues 565–639 is c; the sequence is LMQAAGQAVT…MNKMLLASVK (75 aa).

The protein belongs to the heat shock protein 90 family. Homodimer.

The protein localises to the cytoplasm. Functionally, molecular chaperone. Has ATPase activity. The polypeptide is Chaperone protein HtpG (Shewanella loihica (strain ATCC BAA-1088 / PV-4)).